The following is a 216-amino-acid chain: Protein Syd (216 aa).

The protein belongs to the Syd family.

The protein resides in the cell inner membrane. Its function is as follows. Interacts with the SecY protein in vivo. May bind preferentially to an uncomplexed state of SecY, thus functioning either as a chelating agent for excess SecY in the cell or as a regulatory factor that negatively controls the translocase function. The chain is Protein Syd from Shewanella frigidimarina (strain NCIMB 400).